Consider the following 248-residue polypeptide: Ribonuclease PH (248 aa).

Phosphate contacts are provided by residues Arg86 and 124 to 126 (GTR).

This sequence belongs to the RNase PH family. In terms of assembly, homohexameric ring arranged as a trimer of dimers.

The catalysed reaction is tRNA(n+1) + phosphate = tRNA(n) + a ribonucleoside 5'-diphosphate. Its function is as follows. Phosphorolytic 3'-5' exoribonuclease that plays an important role in tRNA 3'-end maturation. Removes nucleotide residues following the 3'-CCA terminus of tRNAs; can also add nucleotides to the ends of RNA molecules by using nucleoside diphosphates as substrates, but this may not be physiologically important. Probably plays a role in initiation of 16S rRNA degradation (leading to ribosome degradation) during starvation. The sequence is that of Ribonuclease PH from Listeria innocua serovar 6a (strain ATCC BAA-680 / CLIP 11262).